Reading from the N-terminus, the 312-residue chain is Malate dehydrogenase (312 aa).

NAD(+) is bound by residues 12 to 17 and Asp-36; that span reads GAGFTG. 2 residues coordinate substrate: Arg-87 and Arg-93. NAD(+)-binding positions include Asn-100 and 123–125; that span reads LTN. Residue Asn-125 participates in substrate binding. Ser-149 carries the phosphoserine modification. Position 156 (Arg-156) interacts with substrate. Catalysis depends on His-180, which acts as the Proton acceptor.

It belongs to the LDH/MDH superfamily. MDH type 3 family.

The enzyme catalyses (S)-malate + NAD(+) = oxaloacetate + NADH + H(+). Catalyzes the reversible oxidation of malate to oxaloacetate. This Bacillus anthracis (strain A0248) protein is Malate dehydrogenase.